We begin with the raw amino-acid sequence, 49 residues long: Large ribosomal subunit protein bL33B (49 aa).

It belongs to the bacterial ribosomal protein bL33 family.

This chain is Large ribosomal subunit protein bL33B (rpmG2), found in Listeria innocua serovar 6a (strain ATCC BAA-680 / CLIP 11262).